Consider the following 164-residue polypeptide: MAKKKKKVDENNQVLATNRKARHDYQILDTWEAGVVLLGTEIKSLREGKASLVDAFAVIDNGEVWLHNLHIPTYSMGSWTNHSPKRTRKLLLHRREIDSLMGKVRDGNRTLVPLKLYLVNGRVKLELGLAQGKQDYDKRQDIKRRTEEREVTRELGRRIKGINA.

This sequence belongs to the SmpB family.

Its subcellular location is the cytoplasm. Its function is as follows. Required for rescue of stalled ribosomes mediated by trans-translation. Binds to transfer-messenger RNA (tmRNA), required for stable association of tmRNA with ribosomes. tmRNA and SmpB together mimic tRNA shape, replacing the anticodon stem-loop with SmpB. tmRNA is encoded by the ssrA gene; the 2 termini fold to resemble tRNA(Ala) and it encodes a 'tag peptide', a short internal open reading frame. During trans-translation Ala-aminoacylated tmRNA acts like a tRNA, entering the A-site of stalled ribosomes, displacing the stalled mRNA. The ribosome then switches to translate the ORF on the tmRNA; the nascent peptide is terminated with the 'tag peptide' encoded by the tmRNA and targeted for degradation. The ribosome is freed to recommence translation, which seems to be the essential function of trans-translation. This chain is SsrA-binding protein, found in Corynebacterium efficiens (strain DSM 44549 / YS-314 / AJ 12310 / JCM 11189 / NBRC 100395).